Consider the following 366-residue polypeptide: Flagellar P-ring protein (366 aa).

An N-terminal signal peptide occupies residues M1–A20.

The protein belongs to the FlgI family. The basal body constitutes a major portion of the flagellar organelle and consists of four rings (L,P,S, and M) mounted on a central rod.

The protein resides in the periplasm. Its subcellular location is the bacterial flagellum basal body. Assembles around the rod to form the L-ring and probably protects the motor/basal body from shearing forces during rotation. The polypeptide is Flagellar P-ring protein (Escherichia coli O6:H1 (strain CFT073 / ATCC 700928 / UPEC)).